We begin with the raw amino-acid sequence, 462 residues long: Trigger factor (462 aa).

Positions Gly161–Ala246 constitute a PPIase FKBP-type domain. A compositionally biased stretch (basic and acidic residues) spans Ser428–Asp437. The tract at residues Ser428–Glu462 is disordered. Positions Lys449 to Glu462 are enriched in basic residues.

It belongs to the FKBP-type PPIase family. Tig subfamily.

Its subcellular location is the cytoplasm. The enzyme catalyses [protein]-peptidylproline (omega=180) = [protein]-peptidylproline (omega=0). In terms of biological role, involved in protein export. Acts as a chaperone by maintaining the newly synthesized protein in an open conformation. Functions as a peptidyl-prolyl cis-trans isomerase. The sequence is that of Trigger factor from Paramagnetospirillum magneticum (strain ATCC 700264 / AMB-1) (Magnetospirillum magneticum).